The chain runs to 212 residues: Probable nicotinate-nucleotide adenylyltransferase (212 aa).

This sequence belongs to the NadD family.

The enzyme catalyses nicotinate beta-D-ribonucleotide + ATP + H(+) = deamido-NAD(+) + diphosphate. Its pathway is cofactor biosynthesis; NAD(+) biosynthesis; deamido-NAD(+) from nicotinate D-ribonucleotide: step 1/1. Functionally, catalyzes the reversible adenylation of nicotinate mononucleotide (NaMN) to nicotinic acid adenine dinucleotide (NaAD). This chain is Probable nicotinate-nucleotide adenylyltransferase, found in Chromobacterium violaceum (strain ATCC 12472 / DSM 30191 / JCM 1249 / CCUG 213 / NBRC 12614 / NCIMB 9131 / NCTC 9757 / MK).